The primary structure comprises 340 residues: MTVSKIPIWLDCDPGHDDAIAILLGCFHPAFNLLGISTCFGNAPPENTDYNARSLLTAMGKAQAIPVYKGAQRPWKREPHYAPDIHGISGLDGTSLLPKPTFEARTDKTYIEAIEEAILANNGEISFVSTGALTTLATVFRCKPYLKKSVKYISIMGGGLHGLGNCNPNLSAEFNVWIDPDAANYIFRDPDVKDKCIVVPLNLTHKAIATYKVNEMIYNEKNNSKLRELFLELFQFFAHTYKDMQGFESGPPIHDPVALMPLLEFYGWDPSSAVGFRYKRMDISCIDDVFNENSGKIIIEKEYPNDSDVGTIIGLDLNIQYFWDQIFEALNRADKMSTIG.

H254 is a catalytic residue.

The protein belongs to the IUNH family.

It is found in the cytoplasm. The protein localises to the nucleus. The enzyme catalyses uridine + H2O = D-ribose + uracil. In terms of biological role, also acts on cytidine. The sequence is that of Uridine nucleosidase (URH1) from Saccharomyces cerevisiae (strain ATCC 204508 / S288c) (Baker's yeast).